The following is an 89-amino-acid chain: Small ribosomal subunit protein bS20 (89 aa).

Belongs to the bacterial ribosomal protein bS20 family.

Its function is as follows. Binds directly to 16S ribosomal RNA. The polypeptide is Small ribosomal subunit protein bS20 (Helicobacter pylori (strain P12)).